We begin with the raw amino-acid sequence, 51 residues long: UPF0181 protein VVA0806 (51 aa).

It belongs to the UPF0181 family.

In Vibrio vulnificus (strain YJ016), this protein is UPF0181 protein VVA0806.